Reading from the N-terminus, the 358-residue chain is uncharacterized protein (358 aa).

Belongs to the serpin family. Poxviruses subfamily.

This is an uncharacterized protein from Fowlpox virus (strain NVSL) (FPV).